The following is a 138-amino-acid chain: Basic phospholipase A2 Tpu-G6D49 (138 aa).

The first 16 residues, 1–16, serve as a signal peptide directing secretion; that stretch reads MRTLWIMAVLLVGVEG. 7 disulfide bridges follow: Cys42/Cys131, Cys44/Cys60, Cys59/Cys111, Cys65/Cys138, Cys66/Cys104, Cys73/Cys97, and Cys91/Cys102. Ca(2+)-binding residues include Tyr43, Gly45, and Gly47. His63 is an active-site residue. Asp64 contacts Ca(2+). Asp105 is a catalytic residue.

Monomer. Ca(2+) is required as a cofactor. In terms of tissue distribution, expressed by the venom gland.

It localises to the secreted. The enzyme catalyses a 1,2-diacyl-sn-glycero-3-phosphocholine + H2O = a 1-acyl-sn-glycero-3-phosphocholine + a fatty acid + H(+). Functionally, snake venom phospholipase A2 (PLA2) that impairs hemostasis. It weakly inhibits ADP-induced platelet aggregation when tested on platelet rich plasma from human and rabbit blood (15-25% of inhibition at 5-10 ug of enzyme), and dose-dependently inhibits blood coagulation, possibly by inhibiting thrombin activation. Also induces local edema a few hours after injection in the hind foot. Exhibits high hydrolytic activities toward L-dipalmitoyl phosphatidylcholine. PLA2 catalyzes the calcium-dependent hydrolysis of the 2-acyl groups in 3-sn-phosphoglycerides. The chain is Basic phospholipase A2 Tpu-G6D49 from Craspedocephalus puniceus (Flat-nosed pitviper).